The following is a 625-amino-acid chain: Probable potassium transport system protein Kup 2 (625 aa).

12 helical membrane passes run Leu10–Leu30, Gly47–Leu67, Val104–Pro124, Pro140–Val160, Phe172–Ile192, Gly214–Leu234, Trp250–Met270, Leu283–Ala303, Trp347–Ala367, Ala369–Val389, Pro396–Val416, and Phe422–Thr442.

Belongs to the HAK/KUP transporter (TC 2.A.72) family.

Its subcellular location is the cell inner membrane. The catalysed reaction is K(+)(in) + H(+)(in) = K(+)(out) + H(+)(out). Its function is as follows. Transport of potassium into the cell. Likely operates as a K(+):H(+) symporter. The protein is Probable potassium transport system protein Kup 2 of Albidiferax ferrireducens (strain ATCC BAA-621 / DSM 15236 / T118) (Rhodoferax ferrireducens).